A 497-amino-acid chain; its full sequence is Glycerol kinase (497 aa).

Thr-11 provides a ligand contact to ADP. 3 residues coordinate ATP: Thr-11, Thr-12, and Ser-13. Thr-11 serves as a coordination point for sn-glycerol 3-phosphate. Arg-15 contacts ADP. The sn-glycerol 3-phosphate site is built by Arg-81, Glu-82, Tyr-134, and Asp-244. Arg-81, Glu-82, Tyr-134, Asp-244, and Gln-245 together coordinate glycerol. ADP-binding residues include Thr-266 and Gly-309. 4 residues coordinate ATP: Thr-266, Gly-309, Gln-313, and Gly-410. 2 residues coordinate ADP: Gly-410 and Asn-414.

Belongs to the FGGY kinase family.

The enzyme catalyses glycerol + ATP = sn-glycerol 3-phosphate + ADP + H(+). The protein operates within polyol metabolism; glycerol degradation via glycerol kinase pathway; sn-glycerol 3-phosphate from glycerol: step 1/1. Inhibited by fructose 1,6-bisphosphate (FBP). In terms of biological role, key enzyme in the regulation of glycerol uptake and metabolism. Catalyzes the phosphorylation of glycerol to yield sn-glycerol 3-phosphate. This chain is Glycerol kinase, found in Fusobacterium nucleatum subsp. nucleatum (strain ATCC 25586 / DSM 15643 / BCRC 10681 / CIP 101130 / JCM 8532 / KCTC 2640 / LMG 13131 / VPI 4355).